The sequence spans 178 residues: CASP-like protein 5A1 (178 aa).

The segment at 1–24 (MFASRPAVHPVEAPPPTDPVEQPT) is disordered. The Cytoplasmic segment spans residues 1-37 (MFASRPAVHPVEAPPPTDPVEQPTGVLMKDLPGMPGT). A helical membrane pass occupies residues 38–58 (AGGLGLRVAQFVFAGVALAVM). Topologically, residues 59–69 (ASTSDFPSVTA) are extracellular. Residues 70–90 (FCYLVAATIMQCLWSFSLAIV) traverse the membrane as a helical segment. Residues 91–105 (DIYALLVKRCLRNRR) lie on the Cytoplasmic side of the membrane. A helical membrane pass occupies residues 106 to 126 (AVCLFAIGDGITAALTFGAAC). At 127–152 (SSAGITVLIDNDLNICAENHCGSFKT) the chain is on the extracellular side. A helical membrane pass occupies residues 153-173 (ATALAFMSWFALTPSFLLNFW). Over 174-178 (SMAAR) the chain is Cytoplasmic.

This sequence belongs to the Casparian strip membrane proteins (CASP) family. Homodimer and heterodimers.

The protein resides in the cell membrane. The polypeptide is CASP-like protein 5A1 (Brachypodium distachyon (Purple false brome)).